Consider the following 500-residue polypeptide: L-arabinose isomerase (500 aa).

Positions 306, 333, 350, and 450 each coordinate Mn(2+).

Belongs to the arabinose isomerase family. In terms of assembly, homohexamer. It depends on Mn(2+) as a cofactor.

The enzyme catalyses beta-L-arabinopyranose = L-ribulose. It functions in the pathway carbohydrate degradation; L-arabinose degradation via L-ribulose; D-xylulose 5-phosphate from L-arabinose (bacterial route): step 1/3. Its function is as follows. Catalyzes the conversion of L-arabinose to L-ribulose. This is L-arabinose isomerase from Yersinia pseudotuberculosis serotype O:3 (strain YPIII).